Reading from the N-terminus, the 354-residue chain is Protein-glutamate methylesterase/protein-glutamine glutaminase 2 (354 aa).

Residues 3 to 120 form the Response regulatory domain; that stretch reads RVVVVDDSMS…PADLADYARD (118 aa). Asp-54 carries the post-translational modification 4-aspartylphosphate. The CheB-type methylesterase domain maps to 164-354; it reads ATRLSRVIAI…MGARLSEALQ (191 aa). Residues Ser-176, His-202, and Asp-298 contribute to the active site.

Belongs to the CheB family. Phosphorylated by CheA. Phosphorylation of the N-terminal regulatory domain activates the methylesterase activity.

It localises to the cytoplasm. It catalyses the reaction [protein]-L-glutamate 5-O-methyl ester + H2O = L-glutamyl-[protein] + methanol + H(+). It carries out the reaction L-glutaminyl-[protein] + H2O = L-glutamyl-[protein] + NH4(+). Its function is as follows. Involved in chemotaxis. Part of a chemotaxis signal transduction system that modulates chemotaxis in response to various stimuli. Catalyzes the demethylation of specific methylglutamate residues introduced into the chemoreceptors (methyl-accepting chemotaxis proteins or MCP) by CheR. Also mediates the irreversible deamidation of specific glutamine residues to glutamic acid. In Burkholderia thailandensis (strain ATCC 700388 / DSM 13276 / CCUG 48851 / CIP 106301 / E264), this protein is Protein-glutamate methylesterase/protein-glutamine glutaminase 2.